The following is a 483-amino-acid chain: MAPEMEEGTLEIGMEYRTVSGVAGPLVILDKVKGPKYQEIVNIRLGDGTTRRGQVLEVDGEKAVVQVFEGTSGIDNKYTTVQFTGEVLKTPVSLDMLGRIFNGSGKPIDNGPPILPEAYLDISGSSINPSERTYPEEMIQTGISTIDVMNSIARGQKIPLFSAAGLPHNEIAAQICRQAGLVKRLEQSKHAAEGGEEDNFAIVFAAMGVNMETAQFFKRDFEENGSMERVTLFLNLANDPTIERIITPRIALTTAEYLAYECGKHVLVILTDMSSYADALREVSAAREEVPGRRGYPGYMYTDLATIYERAGRIEGRKGSITQIPILTMPNDDITHPTPDLTGYITEGQIYIDRQLHNRQIYPPINVLPSLSRLMKSAIGEGMTRRDHSDVSNQLYANYAIGKDVQAMKAVVGEEALSSEDLLYLEFLDKFERKFVAQGAYDTRNIFQSLDLAWTLLRIFPRELLHRIPAKTLDQFYSRDATH.

Belongs to the ATPase alpha/beta chains family. V-ATPase is a heteromultimeric enzyme composed of a peripheral catalytic V1 complex (main components: subunits A, B, C, D, E, and F) attached to an integral membrane V0 proton pore complex (main component: the proteolipid protein).

Non-catalytic subunit of the peripheral V1 complex of vacuolar ATPase. V-ATPase is responsible for acidifying a variety of intracellular compartments in eukaryotic cells. The chain is V-type proton ATPase subunit B 2 from Hordeum vulgare (Barley).